A 296-amino-acid chain; its full sequence is Formamidopyrimidine-DNA glycosylase (296 aa).

Pro-2 functions as the Schiff-base intermediate with DNA in the catalytic mechanism. The active-site Proton donor is the Glu-3. The active-site Proton donor; for beta-elimination activity is the Lys-61. The DNA site is built by His-104, Arg-123, and Lys-169. The FPG-type zinc finger occupies Asp-255 to Pro-289. Arg-279 serves as the catalytic Proton donor; for delta-elimination activity.

It belongs to the FPG family. In terms of assembly, monomer. The cofactor is Zn(2+).

The catalysed reaction is Hydrolysis of DNA containing ring-opened 7-methylguanine residues, releasing 2,6-diamino-4-hydroxy-5-(N-methyl)formamidopyrimidine.. It carries out the reaction 2'-deoxyribonucleotide-(2'-deoxyribose 5'-phosphate)-2'-deoxyribonucleotide-DNA = a 3'-end 2'-deoxyribonucleotide-(2,3-dehydro-2,3-deoxyribose 5'-phosphate)-DNA + a 5'-end 5'-phospho-2'-deoxyribonucleoside-DNA + H(+). Its function is as follows. Involved in base excision repair of DNA damaged by oxidation or by mutagenic agents. Acts as a DNA glycosylase that recognizes and removes damaged bases. Has a preference for oxidized purines, such as 7,8-dihydro-8-oxoguanine (8-oxoG). Has AP (apurinic/apyrimidinic) lyase activity and introduces nicks in the DNA strand. Cleaves the DNA backbone by beta-delta elimination to generate a single-strand break at the site of the removed base with both 3'- and 5'-phosphates. This is Formamidopyrimidine-DNA glycosylase from Mycobacterium sp. (strain KMS).